The chain runs to 206 residues: Small ribosomal subunit protein uS4 (206 aa).

Residues 94–157 enclose the S4 RNA-binding domain; that stretch reads RRLDNVVYRL…RSRTYFKNLV (64 aa).

It belongs to the universal ribosomal protein uS4 family. As to quaternary structure, part of the 30S ribosomal subunit. Contacts protein S5. The interaction surface between S4 and S5 is involved in control of translational fidelity.

In terms of biological role, one of the primary rRNA binding proteins, it binds directly to 16S rRNA where it nucleates assembly of the body of the 30S subunit. Functionally, with S5 and S12 plays an important role in translational accuracy. The polypeptide is Small ribosomal subunit protein uS4 (Chloroflexus aurantiacus (strain ATCC 29364 / DSM 637 / Y-400-fl)).